A 70-amino-acid polypeptide reads, in one-letter code: Turripeptide Pal9.2 (70 aa).

The N-terminal stretch at 1-20 (MKVYCLLVVLLVGLVSQTQG) is a signal peptide. The 50-residue stretch at 21–70 (QLDKKCNMACTLDYRPVCGSDGKTYPNRCALTSTACESQQSITVLHDGEC) folds into the Kazal-like domain. Cystine bridges form between Cys26–Cys56, Cys30–Cys49, and Cys38–Cys70.

Belongs to the conopeptide P-like superfamily. Expressed by the venom duct.

The protein localises to the secreted. Its function is as follows. Acts as a neurotoxin by inhibiting an ion channel. May also act as a serine protease inhibitor, since it possess the kazal serine protease inhibitor signature. The protein is Turripeptide Pal9.2 of Polystira albida (White giant-turris).